The chain runs to 600 residues: Glutamine--fructose-6-phosphate aminotransferase [isomerizing] (600 aa).

The active-site Nucleophile; for GATase activity is cysteine 2. The Glutamine amidotransferase type-2 domain maps to 2–217 (CGIVGYIGQL…DKEMVIVTDD (216 aa)). 2 consecutive SIS domains span residues 283–422 (IAAA…KNGI) and 452–590 (IARE…VDKP). Lysine 595 serves as the catalytic For Fru-6P isomerization activity.

In terms of assembly, homodimer.

It is found in the cytoplasm. The catalysed reaction is D-fructose 6-phosphate + L-glutamine = D-glucosamine 6-phosphate + L-glutamate. Functionally, catalyzes the first step in hexosamine metabolism, converting fructose-6P into glucosamine-6P using glutamine as a nitrogen source. This is Glutamine--fructose-6-phosphate aminotransferase [isomerizing] from Bacillus subtilis (strain 168).